A 372-amino-acid polypeptide reads, in one-letter code: Cytochrome b (372 aa).

4 consecutive transmembrane segments (helical) span residues 25-45, 69-90, 105-125, and 170-190; these read FGSMLLTCLALQTMTGFFLAI, WMMQNLHAIGASMFFICIYIHI, WLSGTTLLIILMATAFFGYVL, and FFALHFILPFTIISMSSIHIM. Positions 75 and 89 each coordinate heme b. Positions 174 and 188 each coordinate heme b. A ubiquinone is bound at residue H193. 4 consecutive transmembrane segments (helical) span residues 218 to 238, 280 to 300, 312 to 332, and 339 to 358; these read HKDMLMLTIMMTALFIIMSFN, LGGAVALVLSVTILMTMPFTH, LMQFMFWTLVTTFIMITWAAT, and FTTIGQVTSILYFTFFIMNP.

Belongs to the cytochrome b family. In terms of assembly, the cytochrome bc1 complex contains 3 respiratory subunits (MT-CYB, CYC1 and UQCRFS1), 2 core proteins (UQCRC1 and UQCRC2) and probably 6 low-molecular weight proteins. Heme b serves as cofactor.

It is found in the mitochondrion inner membrane. Functionally, component of the ubiquinol-cytochrome c reductase complex (complex III or cytochrome b-c1 complex) that is part of the mitochondrial respiratory chain. The b-c1 complex mediates electron transfer from ubiquinol to cytochrome c. Contributes to the generation of a proton gradient across the mitochondrial membrane that is then used for ATP synthesis. This chain is Cytochrome b (MT-CYB), found in Pantherophis bairdi (Baird's ratsnake).